The primary structure comprises 75 residues: RNA-binding protein KhpA (75 aa).

The 47-residue stretch at 29-75 (SIIIELKVAPEDMGKVIGKQGRIAQAIRTLVKAAALKEKKRVIVEII) folds into the KH domain.

The protein belongs to the KhpA RNA-binding protein family. In terms of assembly, forms a complex with KhpB.

The protein localises to the cytoplasm. A probable RNA chaperone. Forms a complex with KhpB which binds to cellular RNA and controls its expression. Plays a role in peptidoglycan (PG) homeostasis and cell length regulation. The chain is RNA-binding protein KhpA from Caldanaerobacter subterraneus subsp. tengcongensis (strain DSM 15242 / JCM 11007 / NBRC 100824 / MB4) (Thermoanaerobacter tengcongensis).